Reading from the N-terminus, the 137-residue chain is Endoribonuclease YbeY (137 aa).

Positions 107, 111, and 117 each coordinate Zn(2+).

It belongs to the endoribonuclease YbeY family. Zn(2+) serves as cofactor.

The protein resides in the cytoplasm. Single strand-specific metallo-endoribonuclease involved in late-stage 70S ribosome quality control and in maturation of the 3' terminus of the 16S rRNA. This chain is Endoribonuclease YbeY, found in Bacteroides thetaiotaomicron (strain ATCC 29148 / DSM 2079 / JCM 5827 / CCUG 10774 / NCTC 10582 / VPI-5482 / E50).